Reading from the N-terminus, the 486-residue chain is Bifunctional protein GlmU (486 aa).

Residues 1–236 (MTDQNLAIVV…SWLVDGINDR (236 aa)) are pyrophosphorylase. UDP-N-acetyl-alpha-D-glucosamine is bound by residues 11 to 14 (LAAG), Lys-25, Gln-78, and 83 to 84 (GT). Asp-109 contacts Mg(2+). Residues Gly-146, Glu-161, Asn-176, and Asn-234 each coordinate UDP-N-acetyl-alpha-D-glucosamine. Asn-234 contributes to the Mg(2+) binding site. The segment at 237 to 257 (AQLSEAAAKLNALTVRAWQLA) is linker. Residues 258-486 (GVTVQDPATT…ASNAAEESGE (229 aa)) are N-acetyltransferase. UDP-N-acetyl-alpha-D-glucosamine-binding residues include Arg-339 and Lys-357. Residue His-369 is the Proton acceptor of the active site. Tyr-372 and Asn-383 together coordinate UDP-N-acetyl-alpha-D-glucosamine. Acetyl-CoA is bound by residues Ala-386, 392 to 393 (NY), and Ala-429. The interval 459 to 486 (RRPGTDAARAAQRNGAAEASNAAEESGE) is disordered. Residues 465–486 (AARAAQRNGAAEASNAAEESGE) are compositionally biased toward low complexity.

In the N-terminal section; belongs to the N-acetylglucosamine-1-phosphate uridyltransferase family. It in the C-terminal section; belongs to the transferase hexapeptide repeat family. Homotrimer. Mg(2+) is required as a cofactor.

The protein resides in the cytoplasm. It catalyses the reaction alpha-D-glucosamine 1-phosphate + acetyl-CoA = N-acetyl-alpha-D-glucosamine 1-phosphate + CoA + H(+). The enzyme catalyses N-acetyl-alpha-D-glucosamine 1-phosphate + UTP + H(+) = UDP-N-acetyl-alpha-D-glucosamine + diphosphate. It participates in nucleotide-sugar biosynthesis; UDP-N-acetyl-alpha-D-glucosamine biosynthesis; N-acetyl-alpha-D-glucosamine 1-phosphate from alpha-D-glucosamine 6-phosphate (route II): step 2/2. The protein operates within nucleotide-sugar biosynthesis; UDP-N-acetyl-alpha-D-glucosamine biosynthesis; UDP-N-acetyl-alpha-D-glucosamine from N-acetyl-alpha-D-glucosamine 1-phosphate: step 1/1. Its pathway is bacterial outer membrane biogenesis; LPS lipid A biosynthesis. Catalyzes the last two sequential reactions in the de novo biosynthetic pathway for UDP-N-acetylglucosamine (UDP-GlcNAc). The C-terminal domain catalyzes the transfer of acetyl group from acetyl coenzyme A to glucosamine-1-phosphate (GlcN-1-P) to produce N-acetylglucosamine-1-phosphate (GlcNAc-1-P), which is converted into UDP-GlcNAc by the transfer of uridine 5-monophosphate (from uridine 5-triphosphate), a reaction catalyzed by the N-terminal domain. This chain is Bifunctional protein GlmU, found in Leifsonia xyli subsp. xyli (strain CTCB07).